Here is a 189-residue protein sequence, read N- to C-terminus: Peptidyl-tRNA hydrolase (189 aa).

Residue Y17 participates in tRNA binding. H22 acts as the Proton acceptor in catalysis. 3 residues coordinate tRNA: F65, N67, and N113.

The protein belongs to the PTH family. Monomer.

Its subcellular location is the cytoplasm. It catalyses the reaction an N-acyl-L-alpha-aminoacyl-tRNA + H2O = an N-acyl-L-amino acid + a tRNA + H(+). Functionally, hydrolyzes ribosome-free peptidyl-tRNAs (with 1 or more amino acids incorporated), which drop off the ribosome during protein synthesis, or as a result of ribosome stalling. Catalyzes the release of premature peptidyl moieties from peptidyl-tRNA molecules trapped in stalled 50S ribosomal subunits, and thus maintains levels of free tRNAs and 50S ribosomes. The chain is Peptidyl-tRNA hydrolase from Mycoplasma genitalium (strain ATCC 33530 / DSM 19775 / NCTC 10195 / G37) (Mycoplasmoides genitalium).